The primary structure comprises 347 residues: 4-hydroxy-2-oxovalerate aldolase 2 (347 aa).

The Pyruvate carboxyltransferase domain occupies 7–259 (VRITDTSLRD…KTGIDFFDIA (253 aa)). A substrate-binding site is contributed by 15 to 16 (RD). Residue aspartate 16 coordinates Mn(2+). Histidine 19 acts as the Proton acceptor in catalysis. Residues serine 169 and histidine 198 each contribute to the substrate site. Positions 198 and 200 each coordinate Mn(2+). Tyrosine 289 contacts substrate.

The protein belongs to the 4-hydroxy-2-oxovalerate aldolase family.

The enzyme catalyses (S)-4-hydroxy-2-oxopentanoate = acetaldehyde + pyruvate. This is 4-hydroxy-2-oxovalerate aldolase 2 from Mycobacterium ulcerans (strain Agy99).